Here is an 894-residue protein sequence, read N- to C-terminus: Protein translocase subunit SecA (894 aa).

ATP is bound by residues Gln-87, 105–109, and Asp-512; that span reads GEGKT. Positions 857 to 894 are disordered; that stretch reads FNLGDEPEAQQPVTSKKVGRNEPCPCGSGKKYKQCCGK. Zn(2+) contacts are provided by Cys-880, Cys-882, Cys-891, and Cys-892.

The protein belongs to the SecA family. As to quaternary structure, monomer and homodimer. Part of the essential Sec protein translocation apparatus which comprises SecA, SecYEG and auxiliary proteins SecDF-YajC and YidC. Zn(2+) serves as cofactor.

It is found in the cell inner membrane. It localises to the cytoplasm. The catalysed reaction is ATP + H2O + cellular proteinSide 1 = ADP + phosphate + cellular proteinSide 2.. Part of the Sec protein translocase complex. Interacts with the SecYEG preprotein conducting channel. Has a central role in coupling the hydrolysis of ATP to the transfer of proteins into and across the cell membrane, serving as an ATP-driven molecular motor driving the stepwise translocation of polypeptide chains across the membrane. This is Protein translocase subunit SecA from Geotalea uraniireducens (strain Rf4) (Geobacter uraniireducens).